The sequence spans 432 residues: MEMEKEFEEIDKAGNWAAIYQDIRHEASDFPCKVAKLPKNKNRNRYRDVSPFDHSRIKLHQEDNDYINASLIKMEEAQRSYILTQGPLPNTCGHFWEMVWEQKSRGVVMLNRIMEKGSLKCAQYWPQQEEKEMVFDDTGLKLTLISEDVKSYYTVRQLELENLTTKETREILHFHYTTWPDFGVPESPASFLNFLFKVRESGSLSLEHGPIVVHCSAGIGRSGTFCLADTCLLLMDKRKDPSSVDIKKVLLEMRRFRMGLIQTADQLRFSYLAVIEGAKFIMGDSSVQDQWKELSREDLDLPPEHVPPPPRPPKRTLEPHNGKCKELFSSHQWVSEETCGDEDSLAREEGRAQSSAMHSVSSMSPDTEVRRRMVGGGLQSAQASVPTEEELSSTEEEHKAHWPSHWKPFLVNVCMATLLATGAYLCYRVCFH.

N-acetylmethionine is present on M1. In terms of domain architecture, Tyrosine-protein phosphatase spans 3-277; the sequence is MEKEFEEIDK…RFSYLAVIEG (275 aa). Y20 bears the Phosphotyrosine mark. S50 carries the phosphoserine; by CLK1, CLK2 and PKB/AKT1 or PKB/AKT2 modification. Y66 bears the Phosphotyrosine; by EGFR mark. Substrate is bound by residues D181 and 215 to 221; that span reads CSAGIGR. C215 serves as the catalytic Phosphocysteine intermediate. Residue C215 is modified to Cysteine persulfide. C215 bears the S-nitrosocysteine; in reversibly inhibited form mark. 2 positions are modified to phosphoserine; by CLK1 and CLK2: S242 and S243. A substrate-binding site is contributed by Q262. 2 disordered regions span residues 297 to 322 and 335 to 399; these read EDLDLPPEHVPPPPRPPKRTLEPHNG and SEET…EEHK. Phosphoserine occurs at positions 335, 362, and 364. Over residues 354 to 364 the composition is skewed to low complexity; the sequence is SSAMHSVSSMS. T367 carries the post-translational modification Phosphothreonine.

The protein belongs to the protein-tyrosine phosphatase family. Non-receptor class 1 subfamily. Interacts with EPHA3 (phosphorylated); dephosphorylates EPHA3 and may regulate its trafficking and function. Interacts with MET. Interacts with NCK1. Ser-50 is the major site of phosphorylation as compared to Ser-242 and Ser-243. Activated by phosphorylation at Ser-50. In terms of processing, S-nitrosylation of Cys-215 inactivates the enzyme activity. Post-translationally, sulfhydration at Cys-215 following endoplasmic reticulum stress inactivates the enzyme activity, promoting EIF2AK3/PERK activity. Most abundant in testis. Also found in kidney, spleen, muscle, liver, heart and brain.

The protein resides in the endoplasmic reticulum membrane. It carries out the reaction O-phospho-L-tyrosyl-[protein] + H2O = L-tyrosyl-[protein] + phosphate. Functionally, tyrosine-protein phosphatase which acts as a regulator of endoplasmic reticulum unfolded protein response. Mediates dephosphorylation of EIF2AK3/PERK; inactivating the protein kinase activity of EIF2AK3/PERK. May play an important role in CKII- and p60c-src-induced signal transduction cascades. May regulate the EFNA5-EPHA3 signaling pathway which modulates cell reorganization and cell-cell repulsion. May also regulate the hepatocyte growth factor receptor signaling pathway through dephosphorylation of MET. The chain is Tyrosine-protein phosphatase non-receptor type 1 (Ptpn1) from Mus musculus (Mouse).